The following is a 740-amino-acid chain: 1,4-alpha-glucan branching enzyme GlgB (740 aa).

The active-site Nucleophile is D419. E472 acts as the Proton donor in catalysis.

This sequence belongs to the glycosyl hydrolase 13 family. GlgB subfamily. Monomer.

The enzyme catalyses Transfers a segment of a (1-&gt;4)-alpha-D-glucan chain to a primary hydroxy group in a similar glucan chain.. It participates in glycan biosynthesis; glycogen biosynthesis. In terms of biological role, catalyzes the formation of the alpha-1,6-glucosidic linkages in glycogen by scission of a 1,4-alpha-linked oligosaccharide from growing alpha-1,4-glucan chains and the subsequent attachment of the oligosaccharide to the alpha-1,6 position. The protein is 1,4-alpha-glucan branching enzyme GlgB of Paramagnetospirillum magneticum (strain ATCC 700264 / AMB-1) (Magnetospirillum magneticum).